We begin with the raw amino-acid sequence, 914 residues long: Isoleucine--tRNA ligase (914 aa).

Residues 57 to 67 (PYANGQIHMGH) carry the 'HIGH' region motif. Glutamate 554 is an L-isoleucyl-5'-AMP binding site. The 'KMSKS' region signature appears at 595-599 (KMSKS). Lysine 598 is a binding site for ATP. The Zn(2+) site is built by cysteine 883, cysteine 886, cysteine 904, and cysteine 907.

Belongs to the class-I aminoacyl-tRNA synthetase family. IleS type 1 subfamily. As to quaternary structure, monomer. Zn(2+) serves as cofactor.

It is found in the cytoplasm. The enzyme catalyses tRNA(Ile) + L-isoleucine + ATP = L-isoleucyl-tRNA(Ile) + AMP + diphosphate. Catalyzes the attachment of isoleucine to tRNA(Ile). As IleRS can inadvertently accommodate and process structurally similar amino acids such as valine, to avoid such errors it has two additional distinct tRNA(Ile)-dependent editing activities. One activity is designated as 'pretransfer' editing and involves the hydrolysis of activated Val-AMP. The other activity is designated 'posttransfer' editing and involves deacylation of mischarged Val-tRNA(Ile). In Macrococcus caseolyticus (strain JCSC5402) (Macrococcoides caseolyticum), this protein is Isoleucine--tRNA ligase.